The following is a 343-amino-acid chain: MTFKAEYIWIDGTEPTAKLRSKTKIITGQPAGLDALPIWGFDGSSTNQAEGHSSDCVLKPVFTCPDPIRGGDDILVLCEVLNIDLTPHASNTRAALAEVAERFAAQEPIFGIEQEYTFFQDGYPLGFPKGGFPAPQGGYYCGVGADEIFGRDVVEAHLDNCLKAGLAISGINAEVMPGQWEFQVGPVSPLEVSDHLWVARWLLYRTAEDFDVAATLDPKPVKGDWNGAGAHTNFSTKAMRESYDAIITAAESLGEGSKPLDHVKNYGAGIDDRLTGLHETAPWNEYSYGVSDRGASVRIPWQVEKDGKGYIEDRRPNANVDPYVVTRLLVDTCCSALEKAGQV.

The 85-residue stretch at 3–87 folds into the GS beta-grasp domain; sequence FKAEYIWIDG…CEVLNIDLTP (85 aa). In terms of domain architecture, GS catalytic spans 92 to 343; sequence TRAALAEVAE…CSALEKAGQV (252 aa). Mg(2+) contacts are provided by Glu113, Glu115, Glu174, and Glu181. Glu279 serves as a coordination point for L-glutamate.

The protein belongs to the glutamine synthetase family. As to quaternary structure, homooctamer and homotetramer. Mg(2+) serves as cofactor.

It localises to the cytoplasm. It catalyses the reaction L-glutamate + NH4(+) + ATP = L-glutamine + ADP + phosphate + H(+). Its function is as follows. Catalyzes the ATP-dependent biosynthesis of glutamine from glutamate and ammonia. The polypeptide is Glutamine synthetase (Streptomyces viridochromogenes).